A 296-amino-acid chain; its full sequence is uncharacterized protein (296 aa).

The region spanning 1–60 is the HTH lysR-type domain; that stretch reads MDPKISYFQTFIVASKTKSFSKAAKRLGITQGTVSNHISALEKYFDAQLFLRTPEGVDLT. Residues 20 to 39 constitute a DNA-binding region (H-T-H motif); that stretch reads FSKAAKRLGITQGTVSNHIS.

The protein belongs to the LysR transcriptional regulatory family.

This is an uncharacterized protein from Methanocaldococcus jannaschii (strain ATCC 43067 / DSM 2661 / JAL-1 / JCM 10045 / NBRC 100440) (Methanococcus jannaschii).